Here is a 398-residue protein sequence, read N- to C-terminus: S-adenosylmethionine synthase (398 aa).

Histidine 17 contacts ATP. Aspartate 19 lines the Mg(2+) pocket. Glutamate 45 is a K(+) binding site. Positions 58 and 101 each coordinate L-methionine. The interval 101–111 is flexible loop; the sequence is QSPDIAQGVDK. Residues 176-178, 243-244, aspartate 252, 258-259, and lysine 279 each bind ATP; these read DGK, RF, and RK. Aspartate 252 contacts L-methionine. Lysine 283 serves as a coordination point for L-methionine.

The protein belongs to the AdoMet synthase family. Homotetramer; dimer of dimers. The cofactor is Mg(2+). Requires K(+) as cofactor.

The protein localises to the cytoplasm. It carries out the reaction L-methionine + ATP + H2O = S-adenosyl-L-methionine + phosphate + diphosphate. It functions in the pathway amino-acid biosynthesis; S-adenosyl-L-methionine biosynthesis; S-adenosyl-L-methionine from L-methionine: step 1/1. Its function is as follows. Catalyzes the formation of S-adenosylmethionine (AdoMet) from methionine and ATP. The overall synthetic reaction is composed of two sequential steps, AdoMet formation and the subsequent tripolyphosphate hydrolysis which occurs prior to release of AdoMet from the enzyme. The chain is S-adenosylmethionine synthase from Staphylococcus aureus (strain Mu3 / ATCC 700698).